The primary structure comprises 284 residues: Proton-translocating ferredoxin:NAD(+) oxidoreductase complex subunit B (284 aa).

Positions 1–26 (MNTVIMILVVMTIIGLIFGLVLAYVN) are hydrophobic. One can recognise a 4Fe-4S domain in the interval 32–92 (EVNPLVDLVE…AEQVAKLTGK (61 aa)). C49, C52, C57, C75, C138, C142, C148, C152, C172, C175, C178, C182, C217, C220, C223, C227, C246, C249, C254, and C258 together coordinate [4Fe-4S] cluster. 4 4Fe-4S ferredoxin-type domains span residues 133 to 162 (GGPK…MGSN), 163 to 192 (GLPI…FRPV), 206 to 237 (GGAV…VENN), and 239 to 269 (AVVD…IVSG).

The protein belongs to the 4Fe4S bacterial-type ferredoxin family. RnfB subfamily. As to quaternary structure, the complex is composed of six subunits: RnfA, RnfB, RnfC, RnfD, RnfE and RnfG. Requires [4Fe-4S] cluster as cofactor.

The protein resides in the cell membrane. Its function is as follows. Part of a membrane-bound complex that couples electron transfer with translocation of ions across the membrane. Couples electron transfer from reduced ferredoxin to NAD(+) with translocation of H(+) out of the cell. Essential for energy conservation during autotrophic growth. Contributes to ATP synthesis during heterotrophic growth. The protein is Proton-translocating ferredoxin:NAD(+) oxidoreductase complex subunit B of Clostridium ljungdahlii (strain ATCC 55383 / DSM 13528 / PETC).